A 121-amino-acid chain; its full sequence is Large ribosomal subunit protein uL14c (121 aa).

It belongs to the universal ribosomal protein uL14 family. In terms of assembly, part of the 50S ribosomal subunit.

Its subcellular location is the plastid. It localises to the chloroplast. Binds to 23S rRNA. The polypeptide is Large ribosomal subunit protein uL14c (Thalassiosira pseudonana (Marine diatom)).